The following is a 232-amino-acid chain: U2 small nuclear ribonucleoprotein B'' (232 aa).

Residues 10-89 enclose the RRM 1 domain; the sequence is QSIYIQNLNE…KPMRLQYAKA (80 aa). Positions 100–157 are disordered; sequence TFVPKDKKRKQEEKVERKREDSQRPNTANGPSANGPSANNGVPAPSFQPSGQETMPPN. The segment covering 108–122 has biased composition (basic and acidic residues); it reads RKQEEKVERKREDSQ. Polar residues-rich tracts occupy residues 123-139 and 146-156; these read RPNT…SANN and FQPSGQETMPP. Positions 158–232 constitute an RRM 2 domain; sequence NILFIQNLPH…NPMVISFAKK (75 aa).

This sequence belongs to the RRM U1 A/B'' family. As to quaternary structure, component of the spliceosome where it is associated with snRNP U2.

The protein localises to the nucleus. Its subcellular location is the cajal body. It localises to the nucleoplasm. It is found in the cytoplasm. In terms of biological role, involved in nuclear pre-mRNA splicing. This chain is U2 small nuclear ribonucleoprotein B'' (U2B''), found in Arabidopsis thaliana (Mouse-ear cress).